We begin with the raw amino-acid sequence, 270 residues long: Thiazole synthase (270 aa).

The active-site Schiff-base intermediate with DXP is the Lys112. 1-deoxy-D-xylulose 5-phosphate contacts are provided by residues Gly173, 199-200, and 221-222; these read AG and NS.

Belongs to the ThiG family. As to quaternary structure, homotetramer. Forms heterodimers with either ThiH or ThiS.

The protein resides in the cytoplasm. The catalysed reaction is [ThiS sulfur-carrier protein]-C-terminal-Gly-aminoethanethioate + 2-iminoacetate + 1-deoxy-D-xylulose 5-phosphate = [ThiS sulfur-carrier protein]-C-terminal Gly-Gly + 2-[(2R,5Z)-2-carboxy-4-methylthiazol-5(2H)-ylidene]ethyl phosphate + 2 H2O + H(+). It functions in the pathway cofactor biosynthesis; thiamine diphosphate biosynthesis. In terms of biological role, catalyzes the rearrangement of 1-deoxy-D-xylulose 5-phosphate (DXP) to produce the thiazole phosphate moiety of thiamine. Sulfur is provided by the thiocarboxylate moiety of the carrier protein ThiS. In vitro, sulfur can be provided by H(2)S. The chain is Thiazole synthase from Pseudomonas entomophila (strain L48).